Consider the following 490-residue polypeptide: Probable cytosol aminopeptidase (490 aa).

Mn(2+) contacts are provided by K262 and D267. The active site involves K274. Residues D285, D344, and E346 each coordinate Mn(2+). The active site involves R348.

Belongs to the peptidase M17 family. The cofactor is Mn(2+).

It is found in the cytoplasm. It carries out the reaction Release of an N-terminal amino acid, Xaa-|-Yaa-, in which Xaa is preferably Leu, but may be other amino acids including Pro although not Arg or Lys, and Yaa may be Pro. Amino acid amides and methyl esters are also readily hydrolyzed, but rates on arylamides are exceedingly low.. The enzyme catalyses Release of an N-terminal amino acid, preferentially leucine, but not glutamic or aspartic acids.. Presumably involved in the processing and regular turnover of intracellular proteins. Catalyzes the removal of unsubstituted N-terminal amino acids from various peptides. The polypeptide is Probable cytosol aminopeptidase (Xanthomonas oryzae pv. oryzae (strain MAFF 311018)).